Consider the following 342-residue polypeptide: Ribosomal RNA small subunit methyltransferase C (342 aa).

This sequence belongs to the methyltransferase superfamily. RsmC family. Monomer.

It is found in the cytoplasm. It catalyses the reaction guanosine(1207) in 16S rRNA + S-adenosyl-L-methionine = N(2)-methylguanosine(1207) in 16S rRNA + S-adenosyl-L-homocysteine + H(+). Functionally, specifically methylates the guanine in position 1207 of 16S rRNA in the 30S particle. This Salmonella enteritidis PT4 (strain P125109) protein is Ribosomal RNA small subunit methyltransferase C.